Reading from the N-terminus, the 91-residue chain is MKKQESIHTQLPGENVNTGFTASQIYYSTYQVSKLTSHLELHPRDYSSQIGLWKLLGRRKRLLAYLFKKNTGLYERVLTKLGIRGLKVKGR.

It belongs to the universal ribosomal protein uS15 family. As to quaternary structure, part of the 30S ribosomal subunit.

It localises to the plastid. It is found in the chloroplast. This chain is Small ribosomal subunit protein uS15c (rps15), found in Adiantum capillus-veneris (Maidenhair fern).